The following is a 263-amino-acid chain: Regulatory protein RecX (263 aa).

It belongs to the RecX family.

It is found in the cytoplasm. In terms of biological role, modulates RecA activity. This chain is Regulatory protein RecX, found in Bacillus licheniformis (strain ATCC 14580 / DSM 13 / JCM 2505 / CCUG 7422 / NBRC 12200 / NCIMB 9375 / NCTC 10341 / NRRL NRS-1264 / Gibson 46).